The chain runs to 499 residues: Ethanolamine-phosphate phospho-lyase (499 aa).

Residue Lys278 is modified to N6-(pyridoxal phosphate)lysine. The segment covering 468-479 (RDSTTDSKENPS) has biased composition (basic and acidic residues). Residues 468–499 (RDSTTDSKENPSRKRNGMCTDTHSLLSKRLKT) are disordered.

It belongs to the class-III pyridoxal-phosphate-dependent aminotransferase family. In terms of assembly, homotetramer. Pyridoxal 5'-phosphate serves as cofactor.

It localises to the mitochondrion. The enzyme catalyses phosphoethanolamine + H2O = acetaldehyde + NH4(+) + phosphate. Its function is as follows. Catalyzes the pyridoxal-phosphate-dependent breakdown of phosphoethanolamine, converting it to ammonia, inorganic phosphate and acetaldehyde. This chain is Ethanolamine-phosphate phospho-lyase (ETNPPL), found in Homo sapiens (Human).